We begin with the raw amino-acid sequence, 297 residues long: 4-hydroxy-tetrahydrodipicolinate synthase (297 aa).

Thr-55 provides a ligand contact to pyruvate. Tyr-144 functions as the Proton donor/acceptor in the catalytic mechanism. The active-site Schiff-base intermediate with substrate is Lys-172. Ile-213 is a pyruvate binding site.

It belongs to the DapA family. Homotetramer; dimer of dimers.

The protein resides in the cytoplasm. The enzyme catalyses L-aspartate 4-semialdehyde + pyruvate = (2S,4S)-4-hydroxy-2,3,4,5-tetrahydrodipicolinate + H2O + H(+). The protein operates within amino-acid biosynthesis; L-lysine biosynthesis via DAP pathway; (S)-tetrahydrodipicolinate from L-aspartate: step 3/4. Functionally, catalyzes the condensation of (S)-aspartate-beta-semialdehyde [(S)-ASA] and pyruvate to 4-hydroxy-tetrahydrodipicolinate (HTPA). The chain is 4-hydroxy-tetrahydrodipicolinate synthase from Lactococcus lactis subsp. lactis (strain IL1403) (Streptococcus lactis).